Consider the following 880-residue polypeptide: Alanine--tRNA ligase (880 aa).

Zn(2+)-binding residues include histidine 568, histidine 572, cysteine 670, and histidine 674.

It belongs to the class-II aminoacyl-tRNA synthetase family. The cofactor is Zn(2+).

Its subcellular location is the cytoplasm. The enzyme catalyses tRNA(Ala) + L-alanine + ATP = L-alanyl-tRNA(Ala) + AMP + diphosphate. In terms of biological role, catalyzes the attachment of alanine to tRNA(Ala) in a two-step reaction: alanine is first activated by ATP to form Ala-AMP and then transferred to the acceptor end of tRNA(Ala). Also edits incorrectly charged Ser-tRNA(Ala) and Gly-tRNA(Ala) via its editing domain. This Exiguobacterium sibiricum (strain DSM 17290 / CCUG 55495 / CIP 109462 / JCM 13490 / 255-15) protein is Alanine--tRNA ligase.